We begin with the raw amino-acid sequence, 195 residues long: Dephospho-CoA kinase (195 aa).

The 193-residue stretch at 3-195 (IVGLTGGIGS…IALHENYLNH (193 aa)) folds into the DPCK domain. 11–16 (GSGKSA) lines the ATP pocket.

It belongs to the CoaE family.

It is found in the cytoplasm. It catalyses the reaction 3'-dephospho-CoA + ATP = ADP + CoA + H(+). It functions in the pathway cofactor biosynthesis; coenzyme A biosynthesis; CoA from (R)-pantothenate: step 5/5. In terms of biological role, catalyzes the phosphorylation of the 3'-hydroxyl group of dephosphocoenzyme A to form coenzyme A. The sequence is that of Dephospho-CoA kinase from Acinetobacter baylyi (strain ATCC 33305 / BD413 / ADP1).